A 424-amino-acid chain; its full sequence is Magnesium-chelatase subunit ChlI-1, chloroplastic (424 aa).

The transit peptide at 1–60 (MASLLGTSSSAIWASPSLSSPSSKPSSSPICFRPGKLFGSKLNAGIQIRPKKNRSRYHVS) directs the protein to the chloroplast. Val-61 is subject to N-acetylvaline. Intrachain disulfides connect Cys-102–Cys-193 and Cys-354–Cys-396. 119-126 (GDRGTGKS) is an ATP binding site. Ser-355 bears the Phosphoserine mark.

Belongs to the Mg-chelatase subunits D/I family. In terms of assembly, the magnesium chelatase complex is a heterotrimer consisting of subunits CHLI, CHLD and CHLH. Interacts with CHLH and CHLD.

The protein localises to the plastid. Its subcellular location is the chloroplast. The enzyme catalyses protoporphyrin IX + Mg(2+) + ATP + H2O = Mg-protoporphyrin IX + ADP + phosphate + 3 H(+). Its pathway is porphyrin-containing compound metabolism; chlorophyll biosynthesis. Redox regulation; active in reducing conditions, inactive in oxidizing conditions. Thioredoxins f and m mediate the reversible reductive activation of oxidized CHLI1. Functionally, involved in chlorophyll biosynthesis. Catalyzes the insertion of magnesium ion into protoporphyrin IX to yield Mg-protoporphyrin IX. The magnesium-chelatase is a complex of three subunits, CHLI, CHLD and CHLH. The reaction takes place in two steps, with an ATP-dependent activation followed by an ATP-dependent chelation step. Possesses high affinity for ATP and may play a major role in chlorophyll biosynthesis. Does not bind abscisic acid (ABA), but is a positive regulator of ABA signaling. May be involved in ABA signaling in the control of stomatal aperture, but does not seem to have an effect on ABA-induced gene expression. The sequence is that of Magnesium-chelatase subunit ChlI-1, chloroplastic (CHLI1) from Arabidopsis thaliana (Mouse-ear cress).